A 215-amino-acid chain; its full sequence is Adenylate kinase (215 aa).

10 to 15 (GAGKGT) contacts ATP. The NMP stretch occupies residues 30–59 (STGDIFRKNIKEKTELGQKVEGLLAQGKLV). Residues Thr-31, Arg-36, 57 to 59 (KLV), 85 to 88 (GFPR), and Gln-92 contribute to the AMP site. Residues 126 to 163 (GRRVCPSCGASYHIDNNPTKVDGICDACQTPVIQREDD) form an LID region. Residue Arg-127 participates in ATP binding. Cys-130 and Cys-133 together coordinate Zn(2+). 136-137 (SY) contributes to the ATP binding site. 2 residues coordinate Zn(2+): Cys-150 and Cys-153. Positions 160 and 171 each coordinate AMP. Leu-199 is a binding site for ATP.

This sequence belongs to the adenylate kinase family. Monomer.

It is found in the cytoplasm. The catalysed reaction is AMP + ATP = 2 ADP. Its pathway is purine metabolism; AMP biosynthesis via salvage pathway; AMP from ADP: step 1/1. Functionally, catalyzes the reversible transfer of the terminal phosphate group between ATP and AMP. Plays an important role in cellular energy homeostasis and in adenine nucleotide metabolism. The sequence is that of Adenylate kinase from Finegoldia magna (strain ATCC 29328 / DSM 20472 / WAL 2508) (Peptostreptococcus magnus).